The chain runs to 706 residues: Fatty acid oxidation complex subunit alpha (706 aa).

The enoyl-CoA hydratase stretch occupies residues 1–188; sequence MEKTFNLTRR…KMGLVNDVVP (188 aa). The interval 308–706 is 3-hydroxyacyl-CoA dehydrogenase; the sequence is RKVKKAVILG…TMAQENAHFF (399 aa).

This sequence in the N-terminal section; belongs to the enoyl-CoA hydratase/isomerase family. The protein in the central section; belongs to the 3-hydroxyacyl-CoA dehydrogenase family. Heterotetramer of two alpha chains (FadJ) and two beta chains (FadI).

It is found in the cytoplasm. It catalyses the reaction a (3S)-3-hydroxyacyl-CoA = a (2E)-enoyl-CoA + H2O. The enzyme catalyses a 4-saturated-(3S)-3-hydroxyacyl-CoA = a (3E)-enoyl-CoA + H2O. It carries out the reaction a (3S)-3-hydroxyacyl-CoA + NAD(+) = a 3-oxoacyl-CoA + NADH + H(+). The catalysed reaction is (3S)-3-hydroxybutanoyl-CoA = (3R)-3-hydroxybutanoyl-CoA. The protein operates within lipid metabolism; fatty acid beta-oxidation. Catalyzes the formation of a hydroxyacyl-CoA by addition of water on enoyl-CoA. Also exhibits 3-hydroxyacyl-CoA epimerase and 3-hydroxyacyl-CoA dehydrogenase activities. The polypeptide is Fatty acid oxidation complex subunit alpha (Shewanella baltica (strain OS185)).